A 365-amino-acid polypeptide reads, in one-letter code: Putative agmatine deiminase (365 aa).

Catalysis depends on cysteine 357, which acts as the Amidino-cysteine intermediate.

This sequence belongs to the agmatine deiminase family.

It catalyses the reaction agmatine + H2O = N-carbamoylputrescine + NH4(+). This is Putative agmatine deiminase from Yersinia pseudotuberculosis serotype O:1b (strain IP 31758).